The following is a 151-amino-acid chain: Probable flavodoxin 2 (151 aa).

The Flavodoxin-like domain maps to 4 to 144 (ILLVYATMSG…ELINFGRQFA (141 aa)). FMN is bound by residues 10–14 (TMSGN) and 88–119 (VFGS…DIVL).

The protein belongs to the flavodoxin family. It depends on FMN as a cofactor.

Functionally, low-potential electron donor to a number of redox enzymes. The polypeptide is Probable flavodoxin 2 (ykuP) (Bacillus subtilis (strain 168)).